We begin with the raw amino-acid sequence, 291 residues long: Pyridoxal 5'-phosphate synthase subunit PdxS (291 aa).

D23 contributes to the D-ribose 5-phosphate binding site. K80 serves as the catalytic Schiff-base intermediate with D-ribose 5-phosphate. G152 contributes to the D-ribose 5-phosphate binding site. R164 is a binding site for D-glyceraldehyde 3-phosphate. D-ribose 5-phosphate-binding positions include G213 and 234–235 (GS).

Belongs to the PdxS/SNZ family. As to quaternary structure, in the presence of PdxT, forms a dodecamer of heterodimers.

It catalyses the reaction aldehydo-D-ribose 5-phosphate + D-glyceraldehyde 3-phosphate + L-glutamine = pyridoxal 5'-phosphate + L-glutamate + phosphate + 3 H2O + H(+). Its pathway is cofactor biosynthesis; pyridoxal 5'-phosphate biosynthesis. Its function is as follows. Catalyzes the formation of pyridoxal 5'-phosphate from ribose 5-phosphate (RBP), glyceraldehyde 3-phosphate (G3P) and ammonia. The ammonia is provided by the PdxT subunit. Can also use ribulose 5-phosphate and dihydroxyacetone phosphate as substrates, resulting from enzyme-catalyzed isomerization of RBP and G3P, respectively. This is Pyridoxal 5'-phosphate synthase subunit PdxS from Desulfitobacterium hafniense (strain DSM 10664 / DCB-2).